We begin with the raw amino-acid sequence, 32 residues long: Tail virion protein G7P (32 aa).

A helical transmembrane segment spans residues 8–28 (IIYVVFALGLVVSFGLGAITA).

It belongs to the inovirus G7P protein family.

It localises to the virion. It is found in the host membrane. In terms of biological role, may initiate with G9P the virion concomitant assembly-budding process, by interacting with the packaging signal of the viral genome. The assembly-budding takes place at the host inner membrane. In turn, G7P and G9P are present at the end of the filamentous virion that emerges first from the bacterial host. The polypeptide is Tail virion protein G7P (VII) (Escherichia coli (Bacteriophage IKe)).